A 36-amino-acid polypeptide reads, in one-letter code: Cytochrome b6-f complex subunit 5 (36 aa).

A helical membrane pass occupies residues 5–25 (LLAGIVLGLVPVTLAGLFVAA).

Belongs to the PetG family. In terms of assembly, the 4 large subunits of the cytochrome b6-f complex are cytochrome b6, subunit IV (17 kDa polypeptide, PetD), cytochrome f and the Rieske protein, while the 4 small subunits are PetG, PetL, PetM and PetN. The complex functions as a dimer.

The protein localises to the cellular thylakoid membrane. In terms of biological role, component of the cytochrome b6-f complex, which mediates electron transfer between photosystem II (PSII) and photosystem I (PSI), cyclic electron flow around PSI, and state transitions. PetG is required for either the stability or assembly of the cytochrome b6-f complex. The chain is Cytochrome b6-f complex subunit 5 from Acaryochloris marina (strain MBIC 11017).